We begin with the raw amino-acid sequence, 743 residues long: Coiled-coil domain-containing protein 30 (743 aa).

Composition is skewed to basic and acidic residues over residues 1–22 and 133–193; these read MSQEKNEMFESEWSKEREREKQ and SPKE…MKPE. Disordered regions lie at residues 1 to 25, 114 to 193, 208 to 233, and 695 to 715; these read MSQEKNEMFESEWSKEREREKQLAS, ENIC…MKPE, SLLQSQSSGDSSDDSGAQYPSSGDKL, and SKEAMASSKSPEKSPENLVCS. Coiled-coil stretches lie at residues 21–98 and 165–580; these read KQLA…QLNH and REGQ…LIHS. The span at 208–223 shows a compositional bias: low complexity; it reads SLLQSQSSGDSSDDSG.

It belongs to the prefoldin subunit beta family.

This chain is Coiled-coil domain-containing protein 30 (CCDC30), found in Macaca fascicularis (Crab-eating macaque).